The chain runs to 587 residues: 5-aminolevulinate synthase, erythroid-specific, mitochondrial (587 aa).

The N-terminal 49 residues, 1-49 (MVTAAMLLQCCPVPARGPTSLLGKVVKTHQFLFGIGRCPILATQGPNCS), are a transit peptide targeting the mitochondrion. Succinyl-CoA is bound at residue Arg-163. Pyridoxal 5'-phosphate contacts are provided by Cys-258 and Phe-259. The succinyl-CoA site is built by Ser-280 and Lys-299. Ser-332, His-360, and Thr-388 together coordinate pyridoxal 5'-phosphate. Lys-391 is an active-site residue. An N6-(pyridoxal phosphate)lysine modification is found at Lys-391. Pyridoxal 5'-phosphate-binding residues include Thr-420 and Thr-421. Thr-508 contributes to the succinyl-CoA binding site.

The protein belongs to the class-II pyridoxal-phosphate-dependent aminotransferase family. In terms of assembly, homodimer. Interacts with SUCLA2. Requires pyridoxal 5'-phosphate as cofactor.

It is found in the mitochondrion inner membrane. The enzyme catalyses succinyl-CoA + glycine + H(+) = 5-aminolevulinate + CO2 + CoA. It functions in the pathway porphyrin-containing compound metabolism; protoporphyrin-IX biosynthesis; 5-aminolevulinate from glycine: step 1/1. Catalyzes the pyridoxal 5'-phosphate (PLP)-dependent condensation of succinyl-CoA and glycine to form aminolevulinic acid (ALA), with CoA and CO2 as by-products. Contributes significantly to heme formation during erythropoiesis. The protein is 5-aminolevulinate synthase, erythroid-specific, mitochondrial (ALAS2) of Pongo abelii (Sumatran orangutan).